We begin with the raw amino-acid sequence, 178 residues long: Bifunctional protein PyrR (178 aa).

The PRPP-binding motif lies at 99–111; the sequence is IIIIDDVLYTCRT.

This sequence belongs to the purine/pyrimidine phosphoribosyltransferase family. PyrR subfamily. In terms of assembly, homodimer and homohexamer; in equilibrium.

The catalysed reaction is UMP + diphosphate = 5-phospho-alpha-D-ribose 1-diphosphate + uracil. Its function is as follows. Regulates transcriptional attenuation of the pyrimidine nucleotide (pyr) operon by binding in a uridine-dependent manner to specific sites on pyr mRNA. This disrupts an antiterminator hairpin in the RNA and favors formation of a downstream transcription terminator, leading to a reduced expression of downstream genes. Functionally, also displays a weak uracil phosphoribosyltransferase activity which is not physiologically significant. The polypeptide is Bifunctional protein PyrR (Clostridium beijerinckii (strain ATCC 51743 / NCIMB 8052) (Clostridium acetobutylicum)).